A 434-amino-acid polypeptide reads, in one-letter code: Alpha-enolase (434 aa).

Residue Ser40 participates in Mg(2+) binding. Substrate is bound by residues His158 and Glu167. Glu210 acts as the Proton donor in catalysis. Asp245, Glu293, and Asp318 together coordinate Mg(2+). Glu293 and Asp318 together coordinate substrate. The active-site Proton acceptor is Lys343. Residues 370 to 373 (SHRS) and Lys394 contribute to the substrate site.

Belongs to the enolase family. Homodimer. It depends on Mg(2+) as a cofactor.

It is found in the cytoplasm. It carries out the reaction (2R)-2-phosphoglycerate = phosphoenolpyruvate + H2O. Its pathway is carbohydrate degradation; glycolysis; pyruvate from D-glyceraldehyde 3-phosphate: step 4/5. The polypeptide is Alpha-enolase (Python regius (Ball python)).